Consider the following 108-residue polypeptide: Ig kappa chain V-V region HP 93G7 (108 aa).

Residues 1–23 (DIQMTQTTSSLSASLGDRVTISC) form a framework-1 region. Cys-23 and Cys-88 are joined by a disulfide. Residues 24–34 (RASQDISNYLN) are complementarity-determining-1. The interval 35–49 (WYQQKPDGTVKLLIY) is framework-2. The segment at 50–56 (YTSRLHS) is complementarity-determining-2. The tract at residues 57-88 (GVPSRFSGSGSGTDYSLTISNLEQEDIATYFC) is framework-3. Positions 89-97 (QQGNMLPRT) are complementarity-determining-3. The interval 98–108 (FGGGTKLEIKR) is framework-4.

The polypeptide is Ig kappa chain V-V region HP 93G7 (Mus musculus (Mouse)).